The chain runs to 659 residues: uncharacterized protein (659 aa).

An N-terminal signal peptide occupies residues 1–25 (MVKRRLSAFGNAFLIYFIIFRLCCC). Residues 26–556 (SPQTSHWCKY…LYQESSFQKR (531 aa)) lie on the Lumenal side of the membrane. 4 N-linked (GlcNAc...) asparagine glycosylation sites follow: Asn94, Asn111, Asn128, and Asn142. Positions 173-335 (AATIDSNIDE…SLLRVYGKTM (163 aa)) constitute an SUN domain. Asn393 and Asn415 each carry an N-linked (GlcNAc...) asparagine glycan. The segment at 417-445 (TGKSESYPATSTRSFNDISPSSSSSYSTA) is disordered. The span at 423–434 (YPATSTRSFNDI) shows a compositional bias: polar residues. N-linked (GlcNAc...) asparagine glycans are attached at residues Asn495 and Asn504. The chain crosses the membrane as a helical span at residues 557 to 574 (LLMLQLTVLIVLTVYMAV). Residues 575–659 (SRLPENLPTT…IIHSRSHSVC (85 aa)) lie on the Cytoplasmic side of the membrane. Disordered stretches follow at residues 580–603 (NLPTTRSSSNNPIEASRPPFSRDE) and 632–659 (KRDPNTSIRSIHEREQDKIIHSRSHSVC). Polar residues predominate over residues 581–592 (LPTTRSSSNNPI). Basic and acidic residues predominate over residues 641-651 (SIHEREQDKII).

The protein belongs to the SLP1 family. Interacts with EMP65.

The protein localises to the endoplasmic reticulum membrane. Its function is as follows. May be involved in membrane protein folding. This is an uncharacterized protein from Schizosaccharomyces pombe (strain 972 / ATCC 24843) (Fission yeast).